The chain runs to 972 residues: Optomotor-blind protein (972 aa).

6 disordered regions span residues 44–248 (SLLT…YFPA), 263–286 (PGLY…HAHH), 508–563 (AKGF…HPHA), 645–676 (ADVE…TGSP), 805–889 (AVTP…PSEL), and 918–972 (EEAA…GTDQ). Low complexity-rich tracts occupy residues 49 to 80 (GSNN…NTNN) and 97 to 142 (SNHS…NNTS). A compositionally biased stretch (pro residues) spans 155–176 (PPSPAGTPPPTIVGLPPIPPPN). Low complexity-rich tracts occupy residues 177–193 (NNSS…AAAH) and 201–212 (AHHSPSTGAAAP). The segment covering 213 to 225 (PAGPTGLPPPTPP) has biased composition (pro residues). The span at 226-237 (HHLQQQQQQQQH) shows a compositional bias: low complexity. Over residues 274–286 (PPHHPGAHPHAHH) the composition is skewed to basic residues. A DNA-binding region (T-box) is located at residues 332–513 (LEGKDLWEKF…NNPFAKGFRD (182 aa)). A compositionally biased stretch (gly residues) spans 818 to 831 (PPGGGGGGLGGGVV). The span at 835–851 (PRSLSSSPRPRPASHSP) shows a compositional bias: low complexity. Phosphoserine is present on serine 887. Residues 952 to 963 (HPHHQTHLHSHH) are compositionally biased toward basic residues.

In terms of tissue distribution, in third-instar larvae, expressed in the brain region that will develop into optic lobes and more weakly in the thoracic part of the ventral ganglion.

Its subcellular location is the nucleus. Functionally, essential protein that may function as a transcription regulator. Vital for pupal development. Required for proper development of the optic lobes and wings, and abdominal pigmentation. The chain is Optomotor-blind protein (bi) from Drosophila melanogaster (Fruit fly).